A 177-amino-acid polypeptide reads, in one-letter code: Large ribosomal subunit protein uL10 (177 aa).

Belongs to the universal ribosomal protein uL10 family. In terms of assembly, part of the ribosomal stalk of the 50S ribosomal subunit. The N-terminus interacts with L11 and the large rRNA to form the base of the stalk. The C-terminus forms an elongated spine to which L12 dimers bind in a sequential fashion forming a multimeric L10(L12)X complex.

In terms of biological role, forms part of the ribosomal stalk, playing a central role in the interaction of the ribosome with GTP-bound translation factors. This chain is Large ribosomal subunit protein uL10, found in Leptospira biflexa serovar Patoc (strain Patoc 1 / Ames).